The primary structure comprises 429 residues: Protein arginine N-methyltransferase 2 (429 aa).

Disordered stretches follow at residues 41-76 (PEVARGQDPKTGESPLHAAIRSCGAPSEDDTPEDHE) and 137-180 (ALDS…EETP). The segment covering 137-163 (ALDSDDEDDEEMAEGEEAQAEDGEEAP) has biased composition (acidic residues). Low complexity predominate over residues 164 to 174 (ELVAAEEATQT). Residues 190–429 (LEEQVTSDKY…YRLPVCTFLG (240 aa)) enclose the RMT2 domain. S-adenosyl-L-methionine is bound by residues tyrosine 199, methionine 228, 250–255 (FGMGII), 271–273 (EAH), 308–309 (WQ), and aspartate 328.

It belongs to the class I-like SAM-binding methyltransferase superfamily. RMT2 methyltransferase family. Monomer.

The protein localises to the cytoplasm. It localises to the nucleus. S-adenosyl-L-methionine-dependent protein-arginine N-methyltransferase that methylates the delta-nitrogen atom of arginine residues to form N5-methylarginine (type IV) in target proteins. Monomethylates ribosomal protein L12. The chain is Protein arginine N-methyltransferase 2 from Neurospora crassa (strain ATCC 24698 / 74-OR23-1A / CBS 708.71 / DSM 1257 / FGSC 987).